A 523-amino-acid polypeptide reads, in one-letter code: 2-isopropylmalate synthase (523 aa).

Positions 5-267 constitute a Pyruvate carboxyltransferase domain; sequence VIIFDTTLRD…HTNINHHEIW (263 aa). The Mn(2+) site is built by Asp14, His202, His204, and Asn238. Residues 392-523 form a regulatory domain region; sequence RLDYFSVQSG…QNKENNKETV (132 aa).

It belongs to the alpha-IPM synthase/homocitrate synthase family. LeuA type 1 subfamily. In terms of assembly, homodimer. Requires Mn(2+) as cofactor.

The protein resides in the cytoplasm. It catalyses the reaction 3-methyl-2-oxobutanoate + acetyl-CoA + H2O = (2S)-2-isopropylmalate + CoA + H(+). The protein operates within amino-acid biosynthesis; L-leucine biosynthesis; L-leucine from 3-methyl-2-oxobutanoate: step 1/4. Functionally, catalyzes the condensation of the acetyl group of acetyl-CoA with 3-methyl-2-oxobutanoate (2-ketoisovalerate) to form 3-carboxy-3-hydroxy-4-methylpentanoate (2-isopropylmalate). This chain is 2-isopropylmalate synthase, found in Salmonella typhi.